Reading from the N-terminus, the 152-residue chain is SKP1-like protein 10 (152 aa).

Residues 94-152 (IMAANYLNIKSLLDLACQTVADMIKDNTVEHTRKFFNIENDYTHEEEEAVRRENQWGFE) are interaction with the F-box domain of F-box proteins.

This sequence belongs to the SKP1 family. As to quaternary structure, part of a SCF (SKP1-cullin-F-box) protein ligase complex. Interacts with CPR1/CPR30. In terms of tissue distribution, expressed in young seedlings, roots, leaves, floral stems, inflorescences, and siliques.

The protein resides in the nucleus. Its pathway is protein modification; protein ubiquitination. Functionally, involved in ubiquitination and subsequent proteasomal degradation of target proteins. Together with CUL1, RBX1 and a F-box protein, it forms a SCF E3 ubiquitin ligase complex. The functional specificity of this complex depends on the type of F-box protein. In the SCF complex, it serves as an adapter that links the F-box protein to CUL1. The chain is SKP1-like protein 10 (ASK10) from Arabidopsis thaliana (Mouse-ear cress).